We begin with the raw amino-acid sequence, 365 residues long: Carbamoyl phosphate synthase small chain (365 aa).

CPSase regions lie at residues 1-166 (MKRQ…PSPG) and 1-169 (MKRQ…GRGH). L-glutamine-binding residues include serine 45, glycine 218, and glycine 220. Residues 170–357 (RVVLVDFGMK…LTMIENFKKE (188 aa)) form the Glutamine amidotransferase type-1 domain. Cysteine 245 acts as the Nucleophile in catalysis. Residues leucine 246, glutamine 249, asparagine 287, glycine 289, and tyrosine 290 each coordinate L-glutamine. Residues histidine 330 and glutamate 332 contribute to the active site.

It belongs to the CarA family. In terms of assembly, composed of two chains; the small (or glutamine) chain promotes the hydrolysis of glutamine to ammonia, which is used by the large (or ammonia) chain to synthesize carbamoyl phosphate. Tetramer of heterodimers (alpha,beta)4.

It carries out the reaction hydrogencarbonate + L-glutamine + 2 ATP + H2O = carbamoyl phosphate + L-glutamate + 2 ADP + phosphate + 2 H(+). The enzyme catalyses L-glutamine + H2O = L-glutamate + NH4(+). Its pathway is amino-acid biosynthesis; L-arginine biosynthesis; carbamoyl phosphate from bicarbonate: step 1/1. The protein operates within pyrimidine metabolism; UMP biosynthesis via de novo pathway; (S)-dihydroorotate from bicarbonate: step 1/3. Small subunit of the glutamine-dependent carbamoyl phosphate synthetase (CPSase). CPSase catalyzes the formation of carbamoyl phosphate from the ammonia moiety of glutamine, carbonate, and phosphate donated by ATP, constituting the first step of 2 biosynthetic pathways, one leading to arginine and/or urea and the other to pyrimidine nucleotides. The small subunit (glutamine amidotransferase) binds and cleaves glutamine to supply the large subunit with the substrate ammonia. The sequence is that of Carbamoyl phosphate synthase small chain from Bacillus anthracis.